The sequence spans 54 residues: Large ribosomal subunit protein eL37 (54 aa).

The Zn(2+) site is built by C20, C23, C35, and C38. The segment at 20-38 (CRRCGHHTYNVRTKRCSHC) adopts a C4-type zinc-finger fold.

It belongs to the eukaryotic ribosomal protein eL37 family. Requires Zn(2+) as cofactor.

Functionally, binds to the 23S rRNA. The protein is Large ribosomal subunit protein eL37 (rpl37e) of Thermoplasma acidophilum (strain ATCC 25905 / DSM 1728 / JCM 9062 / NBRC 15155 / AMRC-C165).